Reading from the N-terminus, the 60-residue chain is Conotoxin VnMRCL-012 (60 aa).

The N-terminal stretch at 1–22 (MRCLPVFVILLLLIASAPGVDA) is a signal peptide. Residues 23–50 (QPKTKYDVPLASRHDFAKKTPKRLSKPR) constitute a propeptide that is removed on maturation.

The protein belongs to the conotoxin T superfamily. In terms of processing, contains 2 disulfide bonds that can be either 'C1-C3, C2-C4' or 'C1-C4, C2-C3', since these disulfide connectivities have been observed for conotoxins with cysteine framework V (for examples, see AC P0DQQ7 and AC P81755). Expressed by the venom duct.

It localises to the secreted. The protein is Conotoxin VnMRCL-012 of Conus ventricosus (Mediterranean cone).